The sequence spans 161 residues: Small ribosomal subunit protein uS19 (161 aa).

Residues Met-1 to Gln-19 show a composition bias toward basic residues. The tract at residues Met-1–Arg-26 is disordered.

Belongs to the universal ribosomal protein uS19 family.

In terms of biological role, protein S19 forms a complex with S13 that binds strongly to the 16S ribosomal RNA. This Methanococcus maripaludis (strain DSM 14266 / JCM 13030 / NBRC 101832 / S2 / LL) protein is Small ribosomal subunit protein uS19.